Here is a 148-residue protein sequence, read N- to C-terminus: HTH-type transcriptional regulator SarZ (148 aa).

The HTH marR-type domain occupies 9 to 139; that stretch reads SKQLCFLFYV…IINNLRNFVS (131 aa). The segment at residues 55–78 is a DNA-binding region (H-T-H motif); that stretch reads IKKLGERVFLDSGTLTPLLKKLEK.

The protein belongs to the SarZ family.

It is found in the cytoplasm. Functionally, activates transcription of virulence factors alpha- and beta hemolysin genes (hla and hlb). Also, activates RNAIII expression, a central regulator transcribed from the agr locus. The chain is HTH-type transcriptional regulator SarZ (sarZ) from Staphylococcus aureus (strain USA300).